A 509-amino-acid chain; its full sequence is Maturase K (509 aa).

The protein belongs to the intron maturase 2 family. MatK subfamily.

The protein resides in the plastid. It localises to the chloroplast. Functionally, usually encoded in the trnK tRNA gene intron. Probably assists in splicing its own and other chloroplast group II introns. In Jacaranda mimosifolia (Jacaranda), this protein is Maturase K.